The following is a 274-amino-acid chain: Rhamnulose-1-phosphate aldolase (274 aa).

Glutamate 117 is an active-site residue. Residues histidine 141, histidine 143, and histidine 212 each coordinate Zn(2+).

This sequence belongs to the aldolase class II family. RhaD subfamily. In terms of assembly, homotetramer. Zn(2+) serves as cofactor.

The protein resides in the cytoplasm. The enzyme catalyses L-rhamnulose 1-phosphate = (S)-lactaldehyde + dihydroxyacetone phosphate. Its pathway is carbohydrate degradation; L-rhamnose degradation; glycerone phosphate from L-rhamnose: step 3/3. Catalyzes the reversible cleavage of L-rhamnulose-1-phosphate to dihydroxyacetone phosphate (DHAP) and L-lactaldehyde. The protein is Rhamnulose-1-phosphate aldolase of Escherichia coli (strain K12 / MC4100 / BW2952).